Reading from the N-terminus, the 134-residue chain is Replication enhancer protein (134 aa).

It belongs to the geminiviridae replication enhancer protein family. Homooligomer. Interacts with the replication-associated protein (REP). Interacts with host proliferating cell nuclear antigen (PCNA). Interacts with host retinoblastoma-related protein 1 (RBR1), and may thereby deregulate the host cell cycle. Oligomerization and interaction with PCNA are necessary for optimal replication enhancement.

Its function is as follows. Increases viral DNA accumulation. Enhances infectivity and symptom expression. This chain is Replication enhancer protein, found in Tomato yellow leaf curl Sardinia virus (TYLCSV).